We begin with the raw amino-acid sequence, 276 residues long: Pyridinium-3,5-bisthiocarboxylic acid mononucleotide synthase (276 aa).

C176 serves as the catalytic Nucleophile and sulfur donor. C176 is modified (2,3-didehydroalanine (Cys)).

Belongs to the LarE family.

It carries out the reaction pyridinium-3,5-dicarboxylate mononucleotide + [LarE protein]-L-cysteine + ATP = [LarE protein]-dehydroalanine + pyridinium-3-carboxylate-5-thiocarboxylate mononucleotide + AMP + diphosphate + H(+). The catalysed reaction is [LarE protein]-L-cysteine + pyridinium-3-carboxylate-5-thiocarboxylate mononucleotide + ATP = pyridinium-3,5-bisthiocarboxylate mononucleotide + [LarE protein]-dehydroalanine + AMP + diphosphate + H(+). In terms of biological role, involved in the biosynthesis of a nickel-pincer cofactor ((SCS)Ni(II) pincer complex). Catalyzes the ATP-dependent incorporation of two sulfur atoms in pyridinium-3,5-biscarboxylic acid mononucleotide (P2CMN) to yield pyridinium-3,5-bisthiocarboxylic acid mononucleotide (P2TMN). The source of sulfur is the enzyme itself: Cys-176 of LarE is the sulfur donor, thereby being converted into dehydroalanine, and is not regenerated in vivo. Thus, two molecules of LarE undergo sacrificial sulfur transfer to create one P2TMN. Binds nickel. Is required for the activation of the lactate racemase LarA. May also be involved in the activation of other nickel-pincer cofactor-dependent enzymes. In Lactiplantibacillus plantarum (strain ATCC BAA-793 / NCIMB 8826 / WCFS1) (Lactobacillus plantarum), this protein is Pyridinium-3,5-bisthiocarboxylic acid mononucleotide synthase.